Reading from the N-terminus, the 92-residue chain is Progonadoliberin-1 (92 aa).

Residues 1–23 (MEKSRKILVGVLLFTASVAICLA) form the signal peptide. The residue at position 24 (Gln24) is a Pyrrolidone carboxylic acid. Gly33 is subject to Glycine amide.

This sequence belongs to the GnRH family.

It localises to the secreted. Stimulates the secretion of gonadotropins. The polypeptide is Progonadoliberin-1 (GNRH1) (Gallus gallus (Chicken)).